Here is a 514-residue protein sequence, read N- to C-terminus: Glucose-1-phosphate adenylyltransferase small subunit 2, chloroplastic/amyloplastic/cytosolic (514 aa).

The N-terminal 64 residues, 1–64, are a transit peptide targeting the chloroplast; sequence MAMAAAMGVA…RRRPLVFSPR (64 aa). The segment at 35-74 is disordered; the sequence is RPRRPRGVASSSSSSSSAGRRRRPLVFSPRAVSDSKSSQT. A compositionally biased stretch (low complexity) spans 41 to 52; sequence GVASSSSSSSSA.

The protein belongs to the bacterial/plant glucose-1-phosphate adenylyltransferase family. In terms of assembly, heterotetramer composed of two small and two large subunits. In terms of tissue distribution, expressed in leaves.

It localises to the plastid. The protein resides in the chloroplast. Its subcellular location is the amyloplast. The protein localises to the cytoplasm. It is found in the cytosol. The catalysed reaction is alpha-D-glucose 1-phosphate + ATP + H(+) = ADP-alpha-D-glucose + diphosphate. It functions in the pathway glycan biosynthesis; starch biosynthesis. With respect to regulation, activated by 3'phosphoglycerate, inhibited by orthophosphate. Allosteric regulation. Inhibited by inorganic phosphate (Pi). Its function is as follows. Involved in synthesis of starch. Catalyzes the synthesis of ADP-glucose, a molecule that serves as an activated glycosyl donor for alpha-1,4-glucan synthesis. The chloroplastic isoform 1 is essential for starch synthesis in leaf chloroplasts and the cytosolic isoform 2 for synthesis in seed endosperm. The protein is Glucose-1-phosphate adenylyltransferase small subunit 2, chloroplastic/amyloplastic/cytosolic of Oryza sativa subsp. japonica (Rice).